We begin with the raw amino-acid sequence, 435 residues long: Actin-like protein 7A (435 aa).

Positions Met-1–Pro-64 are disordered. Low complexity predominate over residues Gln-20–Ala-31. The required for interaction with TES stretch occupies residues Ala-31–Pro-51. Over residues Thr-55–Pro-64 the composition is skewed to basic and acidic residues.

This sequence belongs to the actin family. As to quaternary structure, interacts (via N-terminus) with TES (via LIM domain 2). Heterodimer with TES; the heterodimer interacts with ENAH to form a heterotrimer. Interacts with ACTL9. Interacts with CYLC1; the interaction may be relevant for proper acrosome attachment to the nuclear envelope. In terms of tissue distribution, strongly expressed in testis. Also expressed in other tissues.

The protein resides in the cytoplasm. It localises to the cytoskeleton. It is found in the golgi apparatus. Its subcellular location is the nucleus. The protein localises to the cytoplasmic vesicle. The protein resides in the secretory vesicle. It localises to the acrosome. In terms of biological role, essential for normal spermatogenesis and male fertility. Required for normal sperm head morphology, acroplaxome formation, acrosome attachment, and acrosome granule stability. May anchor and stabilize acrosomal adherence to the acroplaxome at least in part by facilitating the presence of F-actin in the subacrosomal space. May play an important role in formation and fusion of Golgi-derived vesicles during acrosome biogenesis. This is Actin-like protein 7A (ACTL7A) from Homo sapiens (Human).